A 457-amino-acid polypeptide reads, in one-letter code: Glutamate--tRNA ligase 2 (457 aa).

The 'HIGH' region motif lies at 9-19 (PSPTGYIHIGN). Positions 250 to 254 (GLSKR) match the 'KMSKS' region motif. An ATP-binding site is contributed by K253.

Belongs to the class-I aminoacyl-tRNA synthetase family. Glutamate--tRNA ligase type 1 subfamily. Monomer.

The protein resides in the cytoplasm. It catalyses the reaction tRNA(Glu) + L-glutamate + ATP = L-glutamyl-tRNA(Glu) + AMP + diphosphate. Functionally, catalyzes the attachment of glutamate to tRNA(Glu) in a two-step reaction: glutamate is first activated by ATP to form Glu-AMP and then transferred to the acceptor end of tRNA(Glu). The polypeptide is Glutamate--tRNA ligase 2 (Brucella melitensis biotype 1 (strain ATCC 23456 / CCUG 17765 / NCTC 10094 / 16M)).